Consider the following 154-residue polypeptide: Small ribosomal subunit protein bS6 (154 aa).

The interval 107–154 is disordered; it reads KSDDRERGFRGPKPPGRFESGRKRGYDDREEFRARAGGDDDDRGLDQE. A compositionally biased stretch (basic and acidic residues) spans 125–154; it reads ESGRKRGYDDREEFRARAGGDDDDRGLDQE.

Belongs to the bacterial ribosomal protein bS6 family.

Binds together with bS18 to 16S ribosomal RNA. In Granulibacter bethesdensis (strain ATCC BAA-1260 / CGDNIH1), this protein is Small ribosomal subunit protein bS6.